Reading from the N-terminus, the 466-residue chain is tRNA-2-methylthio-N(6)-dimethylallyladenosine synthase (466 aa).

Positions 21-137 constitute an MTTase N-terminal domain; the sequence is GSYWITTFGC…LEDLLNQVDN (117 aa). [4Fe-4S] cluster is bound by residues C30, C66, C100, C172, C176, and C179. The 238-residue stretch at 158–395 folds into the Radical SAM core domain; it reads RDSNICAWVN…NLLVEQTAKD (238 aa). The 69-residue stretch at 398-466 folds into the TRAM domain; sequence TRYHNQIVEV…AFSLTGSPIQ (69 aa).

Belongs to the methylthiotransferase family. MiaB subfamily. Monomer. It depends on [4Fe-4S] cluster as a cofactor.

The protein localises to the cytoplasm. It carries out the reaction N(6)-dimethylallyladenosine(37) in tRNA + (sulfur carrier)-SH + AH2 + 2 S-adenosyl-L-methionine = 2-methylsulfanyl-N(6)-dimethylallyladenosine(37) in tRNA + (sulfur carrier)-H + 5'-deoxyadenosine + L-methionine + A + S-adenosyl-L-homocysteine + 2 H(+). Catalyzes the methylthiolation of N6-(dimethylallyl)adenosine (i(6)A), leading to the formation of 2-methylthio-N6-(dimethylallyl)adenosine (ms(2)i(6)A) at position 37 in tRNAs that read codons beginning with uridine. The polypeptide is tRNA-2-methylthio-N(6)-dimethylallyladenosine synthase (Prochlorococcus marinus (strain SARG / CCMP1375 / SS120)).